Consider the following 603-residue polypeptide: Sulfite reductase [NADPH] flavoprotein alpha-component (603 aa).

Residues 64–202 (ITLISASQTG…QAETWRAAIV (139 aa)) enclose the Flavodoxin-like domain. FMN contacts are provided by residues 70 to 75 (SQTGNA), 117 to 120 (STQG), and 153 to 162 (LGDSSYEHFA). The region spanning 236 to 452 (EAPLTAHLAL…IEHNDNFRLP (217 aa)) is the FAD-binding FR-type domain. FAD contacts are provided by residues Thr326, Leu360, 390–393 (RLYS), 408–410 (TVG), Tyr414, and 423–426 (GGAS). Residues 523-524 (SR), 529-533 (KIYVQ), and Asp565 contribute to the NADP(+) site. Tyr603 lines the FAD pocket.

The protein belongs to the NADPH-dependent sulphite reductase flavoprotein subunit CysJ family. It in the N-terminal section; belongs to the flavodoxin family. In the C-terminal section; belongs to the flavoprotein pyridine nucleotide cytochrome reductase family. In terms of assembly, alpha(8)-beta(8). The alpha component is a flavoprotein, the beta component is a hemoprotein. The cofactor is FAD. FMN is required as a cofactor.

It catalyses the reaction hydrogen sulfide + 3 NADP(+) + 3 H2O = sulfite + 3 NADPH + 4 H(+). Its pathway is sulfur metabolism; hydrogen sulfide biosynthesis; hydrogen sulfide from sulfite (NADPH route): step 1/1. In terms of biological role, component of the sulfite reductase complex that catalyzes the 6-electron reduction of sulfite to sulfide. This is one of several activities required for the biosynthesis of L-cysteine from sulfate. The flavoprotein component catalyzes the electron flow from NADPH -&gt; FAD -&gt; FMN to the hemoprotein component. The chain is Sulfite reductase [NADPH] flavoprotein alpha-component from Sodalis glossinidius (strain morsitans).